Consider the following 471-residue polypeptide: Glutamate--tRNA ligase (471 aa).

Residues 9-19 (PSPTGYLHVGG) carry the 'HIGH' region motif. Residues cysteine 98, cysteine 100, cysteine 125, and histidine 127 each coordinate Zn(2+). Residues 237–241 (KLSKR) carry the 'KMSKS' region motif. Lysine 240 serves as a coordination point for ATP.

Belongs to the class-I aminoacyl-tRNA synthetase family. Glutamate--tRNA ligase type 1 subfamily. In terms of assembly, monomer. The cofactor is Zn(2+).

The protein resides in the cytoplasm. The catalysed reaction is tRNA(Glu) + L-glutamate + ATP = L-glutamyl-tRNA(Glu) + AMP + diphosphate. In terms of biological role, catalyzes the attachment of glutamate to tRNA(Glu) in a two-step reaction: glutamate is first activated by ATP to form Glu-AMP and then transferred to the acceptor end of tRNA(Glu). This Escherichia coli (strain ATCC 8739 / DSM 1576 / NBRC 3972 / NCIMB 8545 / WDCM 00012 / Crooks) protein is Glutamate--tRNA ligase.